A 285-amino-acid polypeptide reads, in one-letter code: Prephenate dehydratase (285 aa).

Positions 2-183 (KVGYLGPAAT…NHTRFVILSP (182 aa)) constitute a Prephenate dehydratase domain. In terms of domain architecture, ACT spans 204–281 (MVMLPQDDQS…CKVRLLGAYQ (78 aa)).

It carries out the reaction prephenate + H(+) = 3-phenylpyruvate + CO2 + H2O. Its pathway is amino-acid biosynthesis; L-phenylalanine biosynthesis; phenylpyruvate from prephenate: step 1/1. This Bacillus subtilis (strain 168) protein is Prephenate dehydratase (pheA).